We begin with the raw amino-acid sequence, 1108 residues long: Folliculin-interacting protein 2 (1108 aa).

The uDENN FNIP1/2-type domain occupies 38–456 (FGLSDIRLLV…TVMPVDHPPI (419 aa)). 4 disordered regions span residues 89 to 112 (QESS…GGSL), 209 to 233 (RTGS…DRDS), 598 to 635 (SEGV…AEPD), and 649 to 671 (QNDQ…PRVR). Positions 91-106 (SSSSSGSSSSGSSSSH) are enriched in low complexity. Phosphoserine is present on residues S212 and S217. The 571-residue stretch at 464–1034 (TSQSVNMLAK…VSSLLQSILQ (571 aa)) folds into the cDENN FNIP1/2-type domain. Positions 540–905 (DDQVINGSKI…DEACVLALLE (366 aa)) are interaction with PRKAA1. The span at 606 to 620 (LGHKPEKNRCKRPEQ) shows a compositional bias: basic and acidic residues. Positions 652–663 (QEATQDCSSSPP) are enriched in polar residues. Residues S720, S721, and S723 each carry the phosphoserine modification. Positions 1044 to 1099 (FCIMHLEDRLQEMYLKSKMLSEYLRGHTRVHVKELSVVLGIESNDLPLLTAIASTH) constitute a dDENN FNIP1/2-type domain.

This sequence belongs to the FNIP family. In terms of assembly, homodimer and homomultimer. Heterodimer and heteromultimer with FNIP1. Interacts (via C-terminus) with FLCN (via C-terminus). Phosphorylated FLCN is preferentially bound. Component of the lysosomal folliculin complex (LFC), composed of FLCN, FNIP1 (or FNIP2), RagA/RRAGA or RagB/RRAGB GDP-bound, RagC/RRAGC or RagD/RRAGD GTP-bound, and Ragulator. Interacts with PRKAA1, PRKAB1 and PRKAG1 subunits of 5'-AMP-activated protein kinase. Interacts with HSP70, HSP90AA1, STIP1, PTGES3, CDC37, BRAF, GCR and CDK4. Phosphorylated by AMPK.

The protein resides in the lysosome membrane. It localises to the cytoplasm. Its function is as follows. Binding partner of the GTPase-activating protein FLCN: involved in the cellular response to amino acid availability by regulating the non-canonical mTORC1 signaling cascade controlling the MiT/TFE factors TFEB and TFE3. Required to promote FLCN recruitment to lysosomes and interaction with Rag GTPases, leading to activation of the non-canonical mTORC1 signaling. In low-amino acid conditions, component of the lysosomal folliculin complex (LFC) on the membrane of lysosomes, which inhibits the GTPase-activating activity of FLCN, thereby inactivating mTORC1 and promoting nuclear translocation of TFEB and TFE3. Upon amino acid restimulation, disassembly of the LFC complex liberates the GTPase-activating activity of FLCN, leading to activation of mTORC1 and subsequent inactivation of TFEB and TFE3. Together with FLCN, regulates autophagy: following phosphorylation by ULK1, interacts with GABARAP and promotes autophagy. In addition to its role in mTORC1 signaling, also acts as a co-chaperone of HSP90AA1/Hsp90: inhibits the ATPase activity of HSP90AA1/Hsp90, leading to activate both kinase and non-kinase client proteins of HSP90AA1/Hsp90. Acts as a scaffold to load client protein FLCN onto HSP90AA1/Hsp90. Competes with the activating co-chaperone AHSA1 for binding to HSP90AA1, thereby providing a reciprocal regulatory mechanism for chaperoning of client proteins. May play a role in the signal transduction pathway of apoptosis induced by O6-methylguanine-mispaired lesions. The chain is Folliculin-interacting protein 2 from Mus musculus (Mouse).